Reading from the N-terminus, the 255-residue chain is Taurine import ATP-binding protein TauB (255 aa).

The ABC transporter domain maps to 2-229; that stretch reads LQISHLYADY…RFVAGESSRS (228 aa). 34–41 serves as a coordination point for ATP; sequence GPSGCGKT.

This sequence belongs to the ABC transporter superfamily. Taurine importer (TC 3.A.1.17.1) family. The complex is composed of two ATP-binding proteins (TauB), two transmembrane proteins (TauC) and a solute-binding protein (TauA).

Its subcellular location is the cell inner membrane. It carries out the reaction taurine(out) + ATP + H2O = taurine(in) + ADP + phosphate + H(+). Its function is as follows. Part of the ABC transporter complex TauABC involved in taurine import. Responsible for energy coupling to the transport system. In Shigella boydii serotype 4 (strain Sb227), this protein is Taurine import ATP-binding protein TauB.